A 212-amino-acid polypeptide reads, in one-letter code: MNLLIMGLPGAGKGTQAAKIVEEFGVAHISTGDMFRAAMANQTEMGRLAKSYIDKGELVPDEVTNGIVKERLAEDDIAEKGFLLDGYPRTIEQAHALDATLEELGLRLDGVINIKVDPSCLIERLSGRIINRKTGETFHKVFNPPVDYKEEDYYQREDDKPETVKRRLDVNIAQGEPILEHYRKLGLVTDIEGNQEITEVFADVEKALLELK.

Residue 10–15 (GAGKGT) coordinates ATP. Residues 30 to 59 (STGDMFRAAMANQTEMGRLAKSYIDKGELV) are NMP. AMP-binding positions include Thr31, Arg36, 57 to 59 (ELV), 86 to 89 (GYPR), and Gln93. Residues 127 to 159 (GRIINRKTGETFHKVFNPPVDYKEEDYYQREDD) form an LID region. ATP is bound by residues Arg128 and 137–138 (TF). AMP-binding residues include Arg156 and Arg167. Gln195 contributes to the ATP binding site.

The protein belongs to the adenylate kinase family. As to quaternary structure, monomer.

Its subcellular location is the cytoplasm. It catalyses the reaction AMP + ATP = 2 ADP. It participates in purine metabolism; AMP biosynthesis via salvage pathway; AMP from ADP: step 1/1. Its function is as follows. Catalyzes the reversible transfer of the terminal phosphate group between ATP and AMP. Plays an important role in cellular energy homeostasis and in adenine nucleotide metabolism. The polypeptide is Adenylate kinase (Streptococcus agalactiae serotype III (strain NEM316)).